Consider the following 493-residue polypeptide: Aminotransferase swnA (493 aa).

This sequence belongs to the class-I pyridoxal-phosphate-dependent aminotransferase family. Pyridoxal 5'-phosphate serves as cofactor.

It functions in the pathway mycotoxin biosynthesis. Functionally, aminotransferase; part of the gene cluster that mediates the biosynthesis of swainsonine (SW), a cytotoxic fungal alkaloid and a potential cancer therapy drug. Swainsonine production occurs via a multibranched pathway and is dispensable for fungal colonization of plants and infection of insect hosts. The first step of swainsonine biosynthesis is the production of the precursor pipecolic acid (PA) via conversion of L-lysine (Lys) to 1-piperideine-6-carboxylate (P6C) by the aminotransferase swnA, the latter being further reduced to PA by the reductase swnR. The PKS-NRPS hybrid synthetase swnK uptakes and condensates PA and malonyl-CoA with and without skipping of the ketoreductase (KR) domain in order to produce 3 intermediates, 1-oxoindolizidine, (1S)-1-hydroxyindolizin, and (1R)-1-hydroxyindolizine; with the transisomer (1S)-1-hydroxyindolizin being predominant. The terminal thioester reductase (TE) domain of swnK is involved in reduction of the thioester bond to release the intermediate aldehydes. The oxidoreductase swnN could contribute to the reduction of 1-oxoindolizidine to (1S)-1-hydroxyindolizin and (1R)-1-hydroxyindolizine, contributing to the major route of SW production. The dioxygenase swnH2 would be responsible for the oxidization of (1R)-1-hydroxyindolizine into (1R,2S)-1,2-dihydroxyindolizine and of (1S)-1-hydroxyindolizin to yield both (1R,2S)-1,2-dihydroxyindolizine and (1S,2S)-1,2-dihydroxyindolizine. The dioxygenase swnH1 then performs the conversion of the 1,2-dihydroxyindolizine epimers to SW. In Arthroderma benhamiae (strain ATCC MYA-4681 / CBS 112371) (Trichophyton mentagrophytes), this protein is Aminotransferase swnA.